We begin with the raw amino-acid sequence, 234 residues long: C2H2-type zinc-finger transcription factor clz7 (234 aa).

2 disordered regions span residues 45 to 99 (RPEG…SRVD) and 118 to 154 (SAQPDFEDWGDLGDLMPEVLPESSGTSSGAATDNGTA). Composition is skewed to low complexity over residues 66–77 (SQSSNTSPTSES) and 140–154 (SSGTSSGAATDNGTA). A C2H2-type 1; degenerate zinc finger spans residues 159 to 184 (NRCWDHGCNGKKFLNHSNLVRHRREN). The C2H2-type 2; degenerate zinc-finger motif lies at 191 to 223 (FICPMCGAYFSRSTARNQHLEKKSCNRVRRYSN).

Belongs to the GLI C2H2-type zinc-finger protein family.

The protein resides in the nucleus. Transcription factor that probably regulates the expression of the gene cluster that mediates the biosynthesis of squalestatin S1 (SQS1, also known as zaragozic acid A), a heavily oxidized fungal polyketide that offers potent cholesterol lowering activity by targeting squalene synthase (SS). The sequence is that of C2H2-type zinc-finger transcription factor clz7 from Cochliobolus lunatus (Filamentous fungus).